Here is a 336-residue protein sequence, read N- to C-terminus: Fructose-1,6-bisphosphatase class 1 (336 aa).

Positions 90, 112, 114, and 115 each coordinate Mg(2+). Residues 115–118, N211, and K277 each bind substrate; that span reads DGSS. E283 contacts Mg(2+).

The protein belongs to the FBPase class 1 family. As to quaternary structure, homotetramer. It depends on Mg(2+) as a cofactor.

It localises to the cytoplasm. The enzyme catalyses beta-D-fructose 1,6-bisphosphate + H2O = beta-D-fructose 6-phosphate + phosphate. It participates in carbohydrate biosynthesis; gluconeogenesis. The polypeptide is Fructose-1,6-bisphosphatase class 1 (Pseudomonas syringae pv. syringae (strain B728a)).